Here is a 306-residue protein sequence, read N- to C-terminus: Ornithine carbamoyltransferase (306 aa).

Residues Ser53–Thr56, Gln80, Arg104, and His131–Gln134 each bind carbamoyl phosphate. Residues Asn162, Asp219, and Ser223–Met224 each bind L-ornithine. Carbamoyl phosphate is bound by residues Cys259–Leu260 and Arg287.

It belongs to the aspartate/ornithine carbamoyltransferase superfamily. OTCase family.

It is found in the cytoplasm. It carries out the reaction carbamoyl phosphate + L-ornithine = L-citrulline + phosphate + H(+). The protein operates within amino-acid degradation; L-arginine degradation via ADI pathway; carbamoyl phosphate from L-arginine: step 2/2. In terms of biological role, reversibly catalyzes the transfer of the carbamoyl group from carbamoyl phosphate (CP) to the N(epsilon) atom of ornithine (ORN) to produce L-citrulline. This Acinetobacter baumannii (strain AYE) protein is Ornithine carbamoyltransferase.